Here is a 135-residue protein sequence, read N- to C-terminus: D-ribose pyranase (135 aa).

The active-site Proton donor is H20. Residues D28, H102, and 124–126 (YSN) contribute to the substrate site.

The protein belongs to the RbsD / FucU family. RbsD subfamily. In terms of assembly, homodecamer.

Its subcellular location is the cytoplasm. It catalyses the reaction beta-D-ribopyranose = beta-D-ribofuranose. It functions in the pathway carbohydrate metabolism; D-ribose degradation; D-ribose 5-phosphate from beta-D-ribopyranose: step 1/2. Functionally, catalyzes the interconversion of beta-pyran and beta-furan forms of D-ribose. This is D-ribose pyranase from Thermotoga maritima (strain ATCC 43589 / DSM 3109 / JCM 10099 / NBRC 100826 / MSB8).